A 374-amino-acid polypeptide reads, in one-letter code: Patatin-2-Kuras 4 (374 aa).

An N-terminal signal peptide occupies residues 1–11 (MILATTSSTCA). One can recognise a PNPLA domain in the interval 20 to 217 (LSIDGGGIKG…TVGDPALLSL (198 aa)). A GXGXXG motif is present at residues 24-29 (GGGIKG). The GXSXG motif lies at 63 to 67 (GTSTG). Serine 65 functions as the Nucleophile in the catalytic mechanism. The N-linked (GlcNAc...) asparagine glycan is linked to asparagine 103. Aspartate 203 acts as the Proton acceptor in catalysis. A DGA/G motif is present at residues 203–205 (DGG). A coiled-coil region spans residues 309–372 (ENALTGTTTE…DRKKLRANKA (64 aa)).

Belongs to the patatin family.

It is found in the vacuole. Probable lipolytic acyl hydrolase (LAH), an activity which is thought to be involved in the response of tubers to pathogens. This is Patatin-2-Kuras 4 (pat2-k4) from Solanum tuberosum (Potato).